Consider the following 268-residue polypeptide: 4-hydroxy-tetrahydrodipicolinate reductase (268 aa).

Residues 9 to 14, 99 to 101, and 123 to 126 each bind NAD(+); these read GAAGRM, GTT, and ASNF. H156 serves as the catalytic Proton donor/acceptor. Residue H157 participates in (S)-2,3,4,5-tetrahydrodipicolinate binding. The active-site Proton donor is K160. 166-167 provides a ligand contact to (S)-2,3,4,5-tetrahydrodipicolinate; it reads GT.

The protein belongs to the DapB family.

Its subcellular location is the cytoplasm. The catalysed reaction is (S)-2,3,4,5-tetrahydrodipicolinate + NAD(+) + H2O = (2S,4S)-4-hydroxy-2,3,4,5-tetrahydrodipicolinate + NADH + H(+). The enzyme catalyses (S)-2,3,4,5-tetrahydrodipicolinate + NADP(+) + H2O = (2S,4S)-4-hydroxy-2,3,4,5-tetrahydrodipicolinate + NADPH + H(+). It participates in amino-acid biosynthesis; L-lysine biosynthesis via DAP pathway; (S)-tetrahydrodipicolinate from L-aspartate: step 4/4. Catalyzes the conversion of 4-hydroxy-tetrahydrodipicolinate (HTPA) to tetrahydrodipicolinate. This chain is 4-hydroxy-tetrahydrodipicolinate reductase, found in Saccharophagus degradans (strain 2-40 / ATCC 43961 / DSM 17024).